The primary structure comprises 485 residues: Signal recognition particle protein (485 aa).

GTP contacts are provided by residues 107–114, 189–193, and 247–250; these read GLQGAGKT, DTAGR, and TKLD. The tract at residues 452 to 485 is disordered; the sequence is GFGGGAPAPQPGFRGYGPPKKQKKGSKKKKGFGL. Positions 471–485 are enriched in basic residues; that stretch reads KKQKKGSKKKKGFGL.

This sequence belongs to the GTP-binding SRP family. SRP54 subfamily. As to quaternary structure, part of the signal recognition particle protein translocation system, which is composed of SRP and FtsY.

The protein localises to the cytoplasm. The catalysed reaction is GTP + H2O = GDP + phosphate + H(+). In terms of biological role, involved in targeting and insertion of nascent membrane proteins into the cytoplasmic membrane. Binds to the hydrophobic signal sequence of the ribosome-nascent chain (RNC) as it emerges from the ribosomes. The SRP-RNC complex is then targeted to the cytoplasmic membrane where it interacts with the SRP receptor FtsY. This chain is Signal recognition particle protein, found in Synechococcus elongatus (strain ATCC 33912 / PCC 7942 / FACHB-805) (Anacystis nidulans R2).